The chain runs to 183 residues: Adenine phosphoribosyltransferase (183 aa).

This sequence belongs to the purine/pyrimidine phosphoribosyltransferase family. Homodimer.

It is found in the cytoplasm. It carries out the reaction AMP + diphosphate = 5-phospho-alpha-D-ribose 1-diphosphate + adenine. The protein operates within purine metabolism; AMP biosynthesis via salvage pathway; AMP from adenine: step 1/1. Its function is as follows. Catalyzes a salvage reaction resulting in the formation of AMP, that is energically less costly than de novo synthesis. This Corynebacterium kroppenstedtii (strain DSM 44385 / JCM 11950 / CIP 105744 / CCUG 35717) protein is Adenine phosphoribosyltransferase.